A 542-amino-acid polypeptide reads, in one-letter code: Hydroxylamine reductase (542 aa).

[4Fe-4S] cluster is bound by residues C3, C6, C15, and C21. Hybrid [4Fe-2O-2S] cluster is bound by residues H243, E267, C311, C398, C426, C451, E485, and K487. At C398 the chain carries Cysteine persulfide.

Belongs to the HCP family. Requires [4Fe-4S] cluster as cofactor. Hybrid [4Fe-2O-2S] cluster is required as a cofactor.

It localises to the cytoplasm. The catalysed reaction is A + NH4(+) + H2O = hydroxylamine + AH2 + H(+). In terms of biological role, catalyzes the reduction of hydroxylamine to form NH(3) and H(2)O. This Syntrophobacter fumaroxidans (strain DSM 10017 / MPOB) protein is Hydroxylamine reductase.